The sequence spans 29 residues: Frontoxin VI (29 aa).

C3 and C24 are joined by a disulfide.

Expressed by the venom gland.

It localises to the secreted. In terms of biological role, binds to muscle nicotinic acetylcholine receptor (nAChR) and inhibit acetylcholine from binding to the receptor, thereby impairing neuromuscular transmission. The chain is Frontoxin VI from Micrurus frontalis (Coral snake).